The following is a 452-amino-acid chain: Elongation factor Tu, mitochondrial (452 aa).

A mitochondrion-targeting transit peptide spans 1-43; that stretch reads MAAATLLRATPLFSGLGAGPAPLLQGLLRPLKAQALPVLCRGL. A tr-type G domain is found at 55 to 251; it reads KPHVNVGTIG…AVDTYIPVPT (197 aa). The tract at residues 64 to 71 is G1; it reads GHVDHGKT. Asp67, Gly69, Lys70, Thr71, and Thr72 together coordinate GTP. Thr71 is a binding site for Mg(2+). N6-acetyllysine is present on Lys79. Lys88 carries the N6-acetyllysine; alternate modification. Lys88 carries the N6-succinyllysine; alternate modification. Residues 105 to 109 form a G2 region; that stretch reads GITIN. Residues 126–129 form a G3 region; sequence DCPG. GTP-binding residues include Asn181, Asp184, Ser219, Ala220, and Leu221. The G4 stretch occupies residues 181–184; the sequence is NKAD. Positions 219-221 are G5; it reads SAL. Lys234 bears the N6-succinyllysine mark. Lys256 bears the N6-acetyllysine mark. Phosphothreonine is present on Thr278. Lys286 is modified (N6-succinyllysine). Residue Ser312 is modified to Phosphoserine. Lys361 and Lys418 each carry N6-acetyllysine.

This sequence belongs to the TRAFAC class translation factor GTPase superfamily. Classic translation factor GTPase family. EF-Tu/EF-1A subfamily. Interacts with NLRX1. Interacts with ATG16L1.

It localises to the mitochondrion. The enzyme catalyses GTP + H2O = GDP + phosphate + H(+). Functionally, GTP hydrolase that promotes the GTP-dependent binding of aminoacyl-tRNA to the A-site of ribosomes during protein biosynthesis. Also plays a role in the regulation of autophagy and innate immunity. Recruits ATG5-ATG12 and NLRX1 at mitochondria and serves as a checkpoint of the RIGI-MAVS pathway. In turn, inhibits RLR-mediated type I interferon while promoting autophagy. The sequence is that of Elongation factor Tu, mitochondrial (TUFM) from Bos taurus (Bovine).